The primary structure comprises 128 residues: Glycine cleavage system H protein (128 aa).

The region spanning 25–107 (IITVGITHHA…YGAGWFFKLK (83 aa)) is the Lipoyl-binding domain. Position 66 is an N6-lipoyllysine (Lys66).

Belongs to the GcvH family. In terms of assembly, the glycine cleavage system is composed of four proteins: P, T, L and H. It depends on (R)-lipoate as a cofactor.

Functionally, the glycine cleavage system catalyzes the degradation of glycine. The H protein shuttles the methylamine group of glycine from the P protein to the T protein. The polypeptide is Glycine cleavage system H protein (Neisseria meningitidis serogroup A / serotype 4A (strain DSM 15465 / Z2491)).